A 50-amino-acid polypeptide reads, in one-letter code: Protein hunchback (50 aa).

C2H2-type zinc fingers lie at residues 1–5 (HLRNH), 11–33 (FKCGKCNYSCANKSMLNSHMKSH), and 39–50 (YRCANCCYATKY).

Belongs to the hunchback C2H2-type zinc-finger protein family.

The protein resides in the nucleus. Gap class segmentation protein that controls development of head structures. The polypeptide is Protein hunchback (hb) (Pholcus phalangioides (Longbodied cellar spider)).